We begin with the raw amino-acid sequence, 524 residues long: GMP synthase [glutamine-hydrolyzing] (524 aa).

The Glutamine amidotransferase type-1 domain occupies 9–207 (RILILDFGSQ…VIHICQCIPN (199 aa)). Residue cysteine 86 is the Nucleophile of the active site. Active-site residues include histidine 181 and glutamate 183. The region spanning 208 to 399 (WTTKHIIEDS…LGLPADLIYR (192 aa)) is the GMPS ATP-PPase domain. Residue 235–241 (SGGVDSA) participates in ATP binding.

Homodimer.

The catalysed reaction is XMP + L-glutamine + ATP + H2O = GMP + L-glutamate + AMP + diphosphate + 2 H(+). Its pathway is purine metabolism; GMP biosynthesis; GMP from XMP (L-Gln route): step 1/1. Catalyzes the synthesis of GMP from XMP. The protein is GMP synthase [glutamine-hydrolyzing] of Coxiella burnetii (strain CbuK_Q154) (Coxiella burnetii (strain Q154)).